Here is a 389-residue protein sequence, read N- to C-terminus: Succinate--CoA ligase [ADP-forming] subunit beta (389 aa).

The 236-residue stretch at 9–244 folds into the ATP-grasp domain; that stretch reads KEIFRSMGVA…LDEEDPKEIE (236 aa). ATP-binding positions include lysine 46, 53 to 55, glutamate 99, cysteine 102, and glutamate 107; that span reads GRG. The Mg(2+) site is built by asparagine 199 and aspartate 213. Substrate contacts are provided by residues asparagine 264 and 321–323; that span reads GIM.

The protein belongs to the succinate/malate CoA ligase beta subunit family. In terms of assembly, heterotetramer of two alpha and two beta subunits. Mg(2+) serves as cofactor.

It catalyses the reaction succinate + ATP + CoA = succinyl-CoA + ADP + phosphate. It carries out the reaction GTP + succinate + CoA = succinyl-CoA + GDP + phosphate. It participates in carbohydrate metabolism; tricarboxylic acid cycle; succinate from succinyl-CoA (ligase route): step 1/1. Succinyl-CoA synthetase functions in the citric acid cycle (TCA), coupling the hydrolysis of succinyl-CoA to the synthesis of either ATP or GTP and thus represents the only step of substrate-level phosphorylation in the TCA. The beta subunit provides nucleotide specificity of the enzyme and binds the substrate succinate, while the binding sites for coenzyme A and phosphate are found in the alpha subunit. The sequence is that of Succinate--CoA ligase [ADP-forming] subunit beta from Macrococcus caseolyticus (strain JCSC5402) (Macrococcoides caseolyticum).